The primary structure comprises 94 residues: Integration host factor subunit beta (94 aa).

Belongs to the bacterial histone-like protein family. As to quaternary structure, heterodimer of an alpha and a beta chain.

Functionally, this protein is one of the two subunits of integration host factor, a specific DNA-binding protein that functions in genetic recombination as well as in transcriptional and translational control. The polypeptide is Integration host factor subunit beta (Escherichia coli (strain UTI89 / UPEC)).